A 152-amino-acid polypeptide reads, in one-letter code: MKLILTTAVDKLGVPGDIVEVKAGYGRNYLLPRGYAIVATRGAEKQIKDIQRAKADRVIRDQEHAEAVKAELEALSAVQVPVRTAQGGKLFGSVTSADVVAAVERAGGPKLDKHAIKLPKNSIKNTGKYAVDVKLVSGMTANLEFAVVDADK.

The protein belongs to the bacterial ribosomal protein bL9 family.

Its function is as follows. Binds to the 23S rRNA. The protein is Large ribosomal subunit protein bL9 of Corynebacterium urealyticum (strain ATCC 43042 / DSM 7109).